Here is a 474-residue protein sequence, read N- to C-terminus: Aspartyl/glutamyl-tRNA(Asn/Gln) amidotransferase subunit B (474 aa).

It belongs to the GatB/GatE family. GatB subfamily. In terms of assembly, heterotrimer of A, B and C subunits.

The catalysed reaction is L-glutamyl-tRNA(Gln) + L-glutamine + ATP + H2O = L-glutaminyl-tRNA(Gln) + L-glutamate + ADP + phosphate + H(+). It carries out the reaction L-aspartyl-tRNA(Asn) + L-glutamine + ATP + H2O = L-asparaginyl-tRNA(Asn) + L-glutamate + ADP + phosphate + 2 H(+). In terms of biological role, allows the formation of correctly charged Asn-tRNA(Asn) or Gln-tRNA(Gln) through the transamidation of misacylated Asp-tRNA(Asn) or Glu-tRNA(Gln) in organisms which lack either or both of asparaginyl-tRNA or glutaminyl-tRNA synthetases. The reaction takes place in the presence of glutamine and ATP through an activated phospho-Asp-tRNA(Asn) or phospho-Glu-tRNA(Gln). The polypeptide is Aspartyl/glutamyl-tRNA(Asn/Gln) amidotransferase subunit B (Persephonella marina (strain DSM 14350 / EX-H1)).